Consider the following 602-residue polypeptide: Multiple epidermal growth factor-like domains protein 9 (602 aa).

The signal sequence occupies residues Met1–Ala30. Residues Ala31 to Asn514 are Extracellular-facing. The disordered stretch occupies residues Ala38 to Pro199. N-linked (GlcNAc...) asparagine glycosylation is present at Asn40. 2 stretches are compositionally biased toward low complexity: residues Pro68 to Ala85 and Ala139 to Ala166. Over residues Pro167–Asp176 the composition is skewed to pro residues. N-linked (GlcNAc...) asparagine glycosylation occurs at Asn182. Residues Pro187–Pro199 are compositionally biased toward pro residues. 20 disulfides stabilise this stretch: Cys204–Cys217, Cys206–Cys224, Cys226–Cys235, Cys238–Cys251, Cys254–Cys266, Cys256–Cys272, Cys274–Cys283, Cys286–Cys298, Cys301–Cys310, Cys303–Cys317, Cys320–Cys329, Cys332–Cys346, Cys349–Cys360, Cys351–Cys371, Cys374–Cys383, Cys386–Cys397, Cys400–Cys415, Cys402–Cys422, Cys425–Cys434, and Cys437–Cys449. Laminin EGF-like domains follow at residues Cys204–Pro253, Cys254–Pro300, Cys301–Arg348, Cys349–Lys399, and Cys400–Lys451. N-linked (GlcNAc...) asparagine glycans are attached at residues Asn205 and Asn218. Asn245 is a glycosylation site (N-linked (GlcNAc...) asparagine). Asn267 carries an N-linked (GlcNAc...) asparagine glycan. Asn305 is a glycosylation site (N-linked (GlcNAc...) asparagine). A glycan (N-linked (GlcNAc...) asparagine) is linked at Asn428. N-linked (GlcNAc...) asparagine glycosylation is found at Asn468, Asn481, and Asn500. A helical transmembrane segment spans residues Ile515–Val535. The Cytoplasmic segment spans residues Tyr536–Ala602.

The protein localises to the membrane. The chain is Multiple epidermal growth factor-like domains protein 9 (MEGF9) from Homo sapiens (Human).